A 119-amino-acid chain; its full sequence is QGPFGPGCEEAGCPEGSACNIITDRCTCPEVRCRVYCSHGFQRSRYGCEVCRCRTEPMKATCDISECPEGMMCSRLTNKCDCKIDINCRKTCPNGLKRDKLGCEYCECKPKRKLVPRLS.

Q1 bears the Pyrrolidone carboxylic acid mark. 10 disulfide bridges follow: C8–C19, C13–C26, C28–C48, C33–C51, C37–C53, C62–C73, C67–C80, C82–C103, C88–C106, and C92–C108. An Antistasin-like 1 domain is found at 28-53 (CPEVRCRVYCSHGFQRSRYGCEVCRC). In terms of domain architecture, Antistasin-like 2 spans 83 to 108 (KIDINCRKTCPNGLKRDKLGCEYCEC). Heparin contacts are provided by residues 97-100 (KRDK) and 111-118 (KRKLVPRL).

The protein belongs to the protease inhibitor I15 (antistasin) family.

It localises to the secreted. Its function is as follows. This highly disulfide-bonded protein is a potent inhibitor of factor Xa. May have therapeutic utility as an anticoagulant. Also exhibits a strong metastatic activity. This chain is Ghilanten, found in Haementeria ghilianii (Amazon leech).